Consider the following 364-residue polypeptide: Succinyl-diaminopimelate desuccinylase (364 aa).

Position 66 (H66) interacts with Zn(2+). D68 is a catalytic residue. D97 provides a ligand contact to Zn(2+). E127 (proton acceptor) is an active-site residue. Zn(2+) contacts are provided by E128, E156, and H341.

The protein belongs to the peptidase M20A family. DapE subfamily. As to quaternary structure, homodimer. Zn(2+) serves as cofactor. Co(2+) is required as a cofactor.

The catalysed reaction is N-succinyl-(2S,6S)-2,6-diaminopimelate + H2O = (2S,6S)-2,6-diaminopimelate + succinate. Its pathway is amino-acid biosynthesis; L-lysine biosynthesis via DAP pathway; LL-2,6-diaminopimelate from (S)-tetrahydrodipicolinate (succinylase route): step 3/3. Catalyzes the hydrolysis of N-succinyl-L,L-diaminopimelic acid (SDAP), forming succinate and LL-2,6-diaminopimelate (DAP), an intermediate involved in the bacterial biosynthesis of lysine and meso-diaminopimelic acid, an essential component of bacterial cell walls. The protein is Succinyl-diaminopimelate desuccinylase of Wolinella succinogenes (strain ATCC 29543 / DSM 1740 / CCUG 13145 / JCM 31913 / LMG 7466 / NCTC 11488 / FDC 602W) (Vibrio succinogenes).